A 249-amino-acid polypeptide reads, in one-letter code: 3-deoxy-manno-octulosonate cytidylyltransferase (249 aa).

Belongs to the KdsB family.

It is found in the cytoplasm. It catalyses the reaction 3-deoxy-alpha-D-manno-oct-2-ulosonate + CTP = CMP-3-deoxy-beta-D-manno-octulosonate + diphosphate. Its pathway is nucleotide-sugar biosynthesis; CMP-3-deoxy-D-manno-octulosonate biosynthesis; CMP-3-deoxy-D-manno-octulosonate from 3-deoxy-D-manno-octulosonate and CTP: step 1/1. The protein operates within bacterial outer membrane biogenesis; lipopolysaccharide biosynthesis. Functionally, activates KDO (a required 8-carbon sugar) for incorporation into bacterial lipopolysaccharide in Gram-negative bacteria. The chain is 3-deoxy-manno-octulosonate cytidylyltransferase from Coxiella burnetii (strain RSA 331 / Henzerling II).